We begin with the raw amino-acid sequence, 300 residues long: Nucleotide-binding protein TM1040_2438 (300 aa).

Residue 24–31 participates in ATP binding; the sequence is GPSGAGRT. 71 to 74 is a binding site for GTP; sequence DPRN.

This sequence belongs to the RapZ-like family.

Displays ATPase and GTPase activities. The chain is Nucleotide-binding protein TM1040_2438 from Ruegeria sp. (strain TM1040) (Silicibacter sp.).